The following is a 156-amino-acid chain: ATP synthase subunit b (156 aa).

The helical transmembrane segment at 11 to 31 threads the bilayer; that stretch reads AIAFILFVWFCMKYVWPPLMA.

The protein belongs to the ATPase B chain family. As to quaternary structure, F-type ATPases have 2 components, F(1) - the catalytic core - and F(0) - the membrane proton channel. F(1) has five subunits: alpha(3), beta(3), gamma(1), delta(1), epsilon(1). F(0) has three main subunits: a(1), b(2) and c(10-14). The alpha and beta chains form an alternating ring which encloses part of the gamma chain. F(1) is attached to F(0) by a central stalk formed by the gamma and epsilon chains, while a peripheral stalk is formed by the delta and b chains.

The protein resides in the cell inner membrane. In terms of biological role, f(1)F(0) ATP synthase produces ATP from ADP in the presence of a proton or sodium gradient. F-type ATPases consist of two structural domains, F(1) containing the extramembraneous catalytic core and F(0) containing the membrane proton channel, linked together by a central stalk and a peripheral stalk. During catalysis, ATP synthesis in the catalytic domain of F(1) is coupled via a rotary mechanism of the central stalk subunits to proton translocation. Component of the F(0) channel, it forms part of the peripheral stalk, linking F(1) to F(0). This Salmonella gallinarum (strain 287/91 / NCTC 13346) protein is ATP synthase subunit b.